We begin with the raw amino-acid sequence, 122 residues long: Large ribosomal subunit protein uL14 (122 aa).

Belongs to the universal ribosomal protein uL14 family. As to quaternary structure, part of the 50S ribosomal subunit. Forms a cluster with proteins L3 and L19. In the 70S ribosome, L14 and L19 interact and together make contacts with the 16S rRNA in bridges B5 and B8.

Its function is as follows. Binds to 23S rRNA. Forms part of two intersubunit bridges in the 70S ribosome. The sequence is that of Large ribosomal subunit protein uL14 from Acidovorax sp. (strain JS42).